The sequence spans 145 residues: D-aminoacyl-tRNA deacylase (145 aa).

The short motif at 137 to 138 (GP) is the Gly-cisPro motif, important for rejection of L-amino acids element.

This sequence belongs to the DTD family. In terms of assembly, homodimer.

The protein resides in the cytoplasm. The catalysed reaction is glycyl-tRNA(Ala) + H2O = tRNA(Ala) + glycine + H(+). It carries out the reaction a D-aminoacyl-tRNA + H2O = a tRNA + a D-alpha-amino acid + H(+). Its function is as follows. An aminoacyl-tRNA editing enzyme that deacylates mischarged D-aminoacyl-tRNAs. Also deacylates mischarged glycyl-tRNA(Ala), protecting cells against glycine mischarging by AlaRS. Acts via tRNA-based rather than protein-based catalysis; rejects L-amino acids rather than detecting D-amino acids in the active site. By recycling D-aminoacyl-tRNA to D-amino acids and free tRNA molecules, this enzyme counteracts the toxicity associated with the formation of D-aminoacyl-tRNA entities in vivo and helps enforce protein L-homochirality. This chain is D-aminoacyl-tRNA deacylase, found in Yersinia pestis bv. Antiqua (strain Antiqua).